Consider the following 596-residue polypeptide: Beta-fructofuranosidase, insoluble isoenzyme 6 (596 aa).

A signal peptide spans methionine 1 to serine 25. Substrate-binding positions include tryptophan 49–aspartate 52, glutamine 68, and tryptophan 76. Aspartate 52 is an active-site residue. N-linked (GlcNAc...) asparagine glycosylation is present at asparagine 80. Residues alanine 113–serine 114, arginine 177–aspartate 178, and glutamate 232 contribute to the substrate site. N-linked (GlcNAc...) asparagine glycosylation is present at asparagine 335. A disulfide bridge links cysteine 436 with cysteine 482. N-linked (GlcNAc...) asparagine glycosylation is present at asparagine 556.

Belongs to the glycosyl hydrolase 32 family. Expressed in roots. Weakly expressed in flowers.

The protein localises to the secreted. The protein resides in the extracellular space. Its subcellular location is the apoplast. It localises to the cell wall. It catalyses the reaction Hydrolysis of terminal non-reducing beta-D-fructofuranoside residues in beta-D-fructofuranosides.. This chain is Beta-fructofuranosidase, insoluble isoenzyme 6 (CIN6), found in Oryza sativa subsp. japonica (Rice).